We begin with the raw amino-acid sequence, 492 residues long: Bifunctional purine biosynthesis protein PurH (492 aa).

One can recognise an MGS-like domain in the interval 1–144 (MKKAILSVSN…KNFKHVTTIV (144 aa)).

The protein belongs to the PurH family.

The enzyme catalyses (6R)-10-formyltetrahydrofolate + 5-amino-1-(5-phospho-beta-D-ribosyl)imidazole-4-carboxamide = 5-formamido-1-(5-phospho-D-ribosyl)imidazole-4-carboxamide + (6S)-5,6,7,8-tetrahydrofolate. It carries out the reaction IMP + H2O = 5-formamido-1-(5-phospho-D-ribosyl)imidazole-4-carboxamide. It participates in purine metabolism; IMP biosynthesis via de novo pathway; 5-formamido-1-(5-phospho-D-ribosyl)imidazole-4-carboxamide from 5-amino-1-(5-phospho-D-ribosyl)imidazole-4-carboxamide (10-formyl THF route): step 1/1. It functions in the pathway purine metabolism; IMP biosynthesis via de novo pathway; IMP from 5-formamido-1-(5-phospho-D-ribosyl)imidazole-4-carboxamide: step 1/1. The sequence is that of Bifunctional purine biosynthesis protein PurH from Staphylococcus haemolyticus (strain JCSC1435).